A 640-amino-acid chain; its full sequence is Biosynthetic arginine decarboxylase (640 aa).

K105 carries the post-translational modification N6-(pyridoxal phosphate)lysine. 290–300 (FDVGGGLAIDY) contacts substrate.

This sequence belongs to the Orn/Lys/Arg decarboxylase class-II family. SpeA subfamily. It depends on Mg(2+) as a cofactor. The cofactor is pyridoxal 5'-phosphate.

It catalyses the reaction L-arginine + H(+) = agmatine + CO2. Functionally, catalyzes the biosynthesis of agmatine from arginine. The polypeptide is Biosynthetic arginine decarboxylase (Vibrio vulnificus (strain CMCP6)).